The sequence spans 221 residues: Germin-like protein subfamily 1 member 15 (221 aa).

Positions 1-21 (MKVSMSLILITFWALVTIAKA) are cleaved as a signal peptide. An intrachain disulfide couples Cys31 to Cys48. Residues 62 to 213 (SGLNQAGITN…AFQLDVNVVK (152 aa)) enclose the Cupin type-1 domain. Residue Asn77 is glycosylated (N-linked (GlcNAc...) asparagine). Mn(2+)-binding residues include His110, His112, Glu117, and His159.

Belongs to the germin family. In terms of assembly, oligomer (believed to be a pentamer but probably hexamer).

Its subcellular location is the secreted. It localises to the extracellular space. The protein resides in the apoplast. In terms of biological role, may play a role in plant defense. Probably has no oxalate oxidase activity even if the active site is conserved. This Arabidopsis thaliana (Mouse-ear cress) protein is Germin-like protein subfamily 1 member 15.